We begin with the raw amino-acid sequence, 575 residues long: Acetolactate synthase large subunit (575 aa).

Glu57 is a thiamine diphosphate binding site. FAD contacts are provided by residues Arg159, 265–286 (HGSY…LGSR), and 308–327 (DIDA…ILSD). Positions 395-475 (QHQMWVAQYY…IKVVLINNHS (81 aa)) are thiamine pyrophosphate binding. Residues Asp446 and Asn473 each coordinate Mg(2+).

Belongs to the TPP enzyme family. As to quaternary structure, dimer of large and small chains. Mg(2+) serves as cofactor. Thiamine diphosphate is required as a cofactor.

It carries out the reaction 2 pyruvate + H(+) = (2S)-2-acetolactate + CO2. It functions in the pathway amino-acid biosynthesis; L-isoleucine biosynthesis; L-isoleucine from 2-oxobutanoate: step 1/4. Its pathway is amino-acid biosynthesis; L-valine biosynthesis; L-valine from pyruvate: step 1/4. The sequence is that of Acetolactate synthase large subunit (ilvB) from Lactococcus lactis subsp. lactis (strain IL1403) (Streptococcus lactis).